A 2051-amino-acid chain; its full sequence is MSFFYRSFANSLLPKQLLRFILARLDLLDSQALDLDNLNFALGRNTVLEFRDVGLILSKLEALTNLPPTFKIQKAKVLLLRITIPVDIYNSPIIVEVEGVDTRIRVASKQEQDEQTAKNKKGTHKDGDEVVPTAADLAQSFLQTEIPTDEQRRLEKALAEEAQEALSESMSDSETDDDGSFATFGTGQGLSLPTFLTNFLQGILDRLQIRIHKVTFQLDMQVPVEPGLSTIELVTFQLALDEVIAEGVTAPGQQKDGSPAIVPREGKRHILLDNLRAFLITEANVFSSLLPTQSAQSLVKPQGPAPHDVPSTLRDMSGSMQSSVGGLDMSISPDQMEALDMLAQSQYEVRDSEDALNIPYESDTQYPEAEENVAGSSPLSTPRASMYQEHDTPMLQDHANSAIMQHQPELWSSYERGIRSEPSLHPPTSFQPQTMPSGAVSPAPSEPSSSASSVRSDDDTPSADTEDLAQSHLYSHEEAESMYMSAFSDAHSTLMPGAYMPGGWGAESEGGESASERDLSTTHPVAGEPQSSTPVVSELASPTPIPEQNPTAQGYEPQHEDTSTPRGITRMVKEIVSLDSISVYVPSTRKQVLAPVTNLAKSNPNLPGAFSVHQSFHSSTTDQSTLLTPENLKEDRQDYAIEIVLKPLTLRFDSSVGFLLAMVVTRLLEAFKGSSDEGAEVKPSSTESILPDIKVCLEQVTMQFLEELTGVADSAKRIYETQKPNFGSDVLLEASLTNLNAFTHQSGSQTEVNVSIEKFAFGYADEAIVSFTGEADLFQSTATVDMLSVGKDIAVKATITPDVTRVDVKTLPLYLKLDLQRLDETFSWFGGLSGFLNMGASEDSVAKAVQIPAKPPQKTRGVRFETPIDPMEKRSGSKIDVRINGVHVDVIGKDCRAVLNTSALKLVHREEAIAAVLKTIRLSGPYVRNSHARAPVVLELDSTRLDYILTPRTRDLERLLELITPSKVKFDEDEDEIMVDTLLRQRRKGGVLGLEVKNFKVRAGNLALLDCIPSLVDDLAKLGTVAKYLPEDDRPGLLTLGQVTNVDCEVDVGGRFGVVNARLTNLELAQITVPSLVAVAVGVVTVNRNENSPIEEELVSTSTAHAPGSSKAPVLMMRMIDDIEPVLKIKLFGLNVDYRVPTIMDVLGLIQEETTPEEFEANLAASVANLGGQATAALRRQDTPESPVVDKEFKPIKLDVAFRDCVVGLNPLGQDSKLAIVLADSHLEAIPGKDSTLDATATLKKACILLIDDVKTLQDVQINARGRAPAMSTPQALELCSKGFVSICEMSSAKAVVKVGKDENGESHVEVSVRDDLLVLETCADSTQTLISLANALTPPTPPSKEIKYRTSVLPVEDLFASITPDAFGRAEGEYDFDDDFAGAQGIECGNEDDDDYYGIGSTEHLEIQSEGYGVAEELFDATNSSLLGDIEVENTNDGMLVSTANLDVPPVSSQSESDLDIQENYFSSEPVKNTTLRWNSRKNLYDQSSDAQVFKSPLVICVRDVHVIWNLYDGYDWVRTREIITKAVQDVEAKAYERKARADRHTYEDEGDEESVVDDCLFNSIYIAVGPNGDPSNLRRAINQELQYQDTTTETESVATTAFTTSTVRASGHRQSRPRGKTLKLSRSKNHKITFELKGVNIDVVTFPPGNETINTIDVRIHDLDVFDHIRTSTWKKFAMYDIDAGERELSKHMVHLEVLNVKPVPDLPATELVVKVNILPLRLHVDQDALDFITRFFEFKDETQPIHQSSSDVPFIQRCEVGDVPVRLDFKPKRVDYAGLRSGHTTEFMNFVILEDSRLVLRHVILYGVSGFDKLGKKLNDIWTADVKSTQLPGVLAGVAPVRSLVNAGSGFKDLIEIPIREYKKDGRIFRSIGKGATAFAKTTGTEVVKLGAKLAIGTQYALQGAEGMLAKNPPNYNHAGPSSSSAGVPAGVDYEVWDEEDFGDHHTPKAISLYADQPLGIMQGMRGAYASLSRDIAIARDAIIAVPTEVMESSSAQGAAKAVLMQAPTILFRPAIGVSKAIGQTLLGATNALDPNHRKRIEAKYKKH.

Residues 31-121 (QALDLDNLNF…QDEQTAKNKK (91 aa)) form the Chorein N-terminal domain. The segment covering 108–117 (SKQEQDEQTA) has biased composition (basic and acidic residues). Disordered regions lie at residues 108–129 (SKQE…DGDE), 152–179 (RRLE…DDDG), 297–331 (SLVK…DMSI), 363–384 (DTQY…TPRA), 419–466 (RSEP…ADTE), and 501–564 (PGGW…DTST). 2 stretches are compositionally biased toward polar residues: residues 374 to 383 (AGSSPLSTPR) and 426 to 435 (PPTSFQPQTM). Positions 436–454 (PSGAVSPAPSEPSSSASSV) are enriched in low complexity.

This sequence belongs to the ATG2 family.

The protein resides in the preautophagosomal structure membrane. The protein localises to the endoplasmic reticulum membrane. The enzyme catalyses a 1,2-diacyl-sn-glycero-3-phosphocholine(in) = a 1,2-diacyl-sn-glycero-3-phosphocholine(out). The catalysed reaction is a 1,2-diacyl-sn-glycero-3-phospho-L-serine(in) = a 1,2-diacyl-sn-glycero-3-phospho-L-serine(out). It catalyses the reaction a 1,2-diacyl-sn-glycero-3-phosphoethanolamine(in) = a 1,2-diacyl-sn-glycero-3-phosphoethanolamine(out). Its function is as follows. Lipid transfer protein required for autophagosome completion and peroxisome degradation. Tethers the edge of the isolation membrane (IM) to the endoplasmic reticulum (ER) and mediates direct lipid transfer from ER to IM for IM expansion. Atg-2 binds to the ER exit site (ERES), which is the membrane source for autophagosome formation, using basic residues in its N-terminal region (NR) and to the expanding edge of the IM through its C-terminal region. The latter binding is assisted by an atg-18-PtdIns3P interaction. Atg-2 then extracts phospholipids from the membrane source using its NR and transfers them to atg-9 to the IM through its predicted beta-sheet-rich structure for membrane expansion. This chain is Autophagy-related protein 2 (apg-2), found in Neurospora crassa (strain ATCC 24698 / 74-OR23-1A / CBS 708.71 / DSM 1257 / FGSC 987).